Consider the following 100-residue polypeptide: Putative protein adenylyltransferase MJ0604 (100 aa).

The short motif at G29–D43 is the GSX(10)DXD motif element. D41 and D43 together coordinate Mg(2+).

The protein belongs to the MntA antitoxin family. It depends on Mg(2+) as a cofactor.

It catalyses the reaction L-tyrosyl-[protein] + ATP = O-(5'-adenylyl)-L-tyrosyl-[protein] + diphosphate. It carries out the reaction O-(5'-adenylyl)-L-tyrosyl-[protein] + ATP = O-[5'-(adenylyl-(5'-&gt;3')-adenylyl)]-L-tyrosyl-[protein] + diphosphate. Its function is as follows. Putative antitoxin component of a putative type VII toxin-antitoxin (TA) system. Its cognate toxin might be MJ0605, which it might AMPylate. The polypeptide is Putative protein adenylyltransferase MJ0604 (Methanocaldococcus jannaschii (strain ATCC 43067 / DSM 2661 / JAL-1 / JCM 10045 / NBRC 100440) (Methanococcus jannaschii)).